The chain runs to 144 residues: MVALKTCSLLLVLLFLAVGLGEKEEVEFRSHAKFAGPRPRGPRYAEGTFISDYSIAMDKIRQQDFVNWLLAQKGKKNDWKHNLTQREARALELAGQSQRNEEKEAQGSSLPKSLSDEDVLRDLLIQELLAWMADQAELCRLRSQ.

The N-terminal stretch at 1–21 (MVALKTCSLLLVLLFLAVGLG) is a signal peptide. 2 consecutive propeptides follow at residues 22–42 (EKEE…PRGP) and 87–144 (EARA…LRSQ). The disordered stretch occupies residues 92–112 (ELAGQSQRNEEKEAQGSSLPK).

The protein belongs to the glucagon family. In terms of tissue distribution, highly expressed in the duodenum and jejunum.

The protein localises to the secreted. Functionally, potent stimulator of insulin secretion and relatively poor inhibitor of gastric acid secretion. In Rattus norvegicus (Rat), this protein is Gastric inhibitory polypeptide (Gip).